The primary structure comprises 462 residues: UDP-N-acetylmuramoylalanine--D-glutamate ligase (462 aa).

112–118 (GTNGKTT) is a binding site for ATP.

This sequence belongs to the MurCDEF family.

Its subcellular location is the cytoplasm. The enzyme catalyses UDP-N-acetyl-alpha-D-muramoyl-L-alanine + D-glutamate + ATP = UDP-N-acetyl-alpha-D-muramoyl-L-alanyl-D-glutamate + ADP + phosphate + H(+). Its pathway is cell wall biogenesis; peptidoglycan biosynthesis. Cell wall formation. Catalyzes the addition of glutamate to the nucleotide precursor UDP-N-acetylmuramoyl-L-alanine (UMA). The polypeptide is UDP-N-acetylmuramoylalanine--D-glutamate ligase (Nostoc sp. (strain PCC 7120 / SAG 25.82 / UTEX 2576)).